The primary structure comprises 394 residues: V-type proton ATPase subunit C (394 aa).

Position 17 is a phosphoserine (S17).

This sequence belongs to the V-ATPase C subunit family. V-ATPase is a heteromultimeric enzyme composed of a peripheral catalytic V1 complex (components A to H) attached to an integral membrane V0 proton pore complex (components: a, c, c', c'', d, e, f and VOA1).

The protein resides in the cytoplasm. It is found in the vacuole membrane. In terms of biological role, subunit of the V1 complex of vacuolar(H+)-ATPase (V-ATPase), a multisubunit enzyme composed of a peripheral complex (V1) that hydrolyzes ATP and a membrane integral complex (V0) that translocates protons. V-ATPase is responsible for acidifying and maintaining the pH of intracellular compartments. Subunit C is necessary for the assembly of the catalytic sector of the enzyme and is likely to have a specific function in its catalytic activity. Reversibly leaves the enzyme after glucose depletion, causing the catalytic subcomplex V1 to detach from the V0 section. In Schizosaccharomyces pombe (strain 972 / ATCC 24843) (Fission yeast), this protein is V-type proton ATPase subunit C.